The sequence spans 185 residues: Ribosome-recycling factor (185 aa).

Belongs to the RRF family.

Its subcellular location is the cytoplasm. Responsible for the release of ribosomes from messenger RNA at the termination of protein biosynthesis. May increase the efficiency of translation by recycling ribosomes from one round of translation to another. In Pseudoalteromonas atlantica (strain T6c / ATCC BAA-1087), this protein is Ribosome-recycling factor.